Here is a 167-residue protein sequence, read N- to C-terminus: Large ribosomal subunit protein bL9 (167 aa).

It belongs to the bacterial ribosomal protein bL9 family.

Functionally, binds to the 23S rRNA. This is Large ribosomal subunit protein bL9 from Nitratidesulfovibrio vulgaris (strain ATCC 29579 / DSM 644 / CCUG 34227 / NCIMB 8303 / VKM B-1760 / Hildenborough) (Desulfovibrio vulgaris).